We begin with the raw amino-acid sequence, 297 residues long: Phosphoribosylaminoimidazole-succinocarboxamide synthase (297 aa).

It belongs to the SAICAR synthetase family.

The enzyme catalyses 5-amino-1-(5-phospho-D-ribosyl)imidazole-4-carboxylate + L-aspartate + ATP = (2S)-2-[5-amino-1-(5-phospho-beta-D-ribosyl)imidazole-4-carboxamido]succinate + ADP + phosphate + 2 H(+). Its pathway is purine metabolism; IMP biosynthesis via de novo pathway; 5-amino-1-(5-phospho-D-ribosyl)imidazole-4-carboxamide from 5-amino-1-(5-phospho-D-ribosyl)imidazole-4-carboxylate: step 1/2. The protein is Phosphoribosylaminoimidazole-succinocarboxamide synthase of Corynebacterium urealyticum (strain ATCC 43042 / DSM 7109).